The sequence spans 728 residues: MVKFLEPTANEIKENKLYQDMGLSDKEYDKVVDILGRMPNYTEIGIFSVMWSEHCSYKHSKPFLKQFPTTGERVLMGPGEGAGVVDIGDNQAVVFKVESHNHPSAIEPYQGAATGVGGIVRDIVSIGARPIQLLNSLRFGELTEKQNQRLFKGVVAGIGGYGNCIGIPTVAGEIEFDRQYEGNPLVNAMCVGIIDHDKIQKGTAKGEGNPVIYVGLKTGRDGIHGATFASEELSEESESKRPSVQIGDPFVGKKLMEATLKAITFPELVGIQDMGAAGLTSSSSEMAAKGGSGIHLELEKVPTREAGISPYEMMLSETQERMLLVVEKGTEQKFLDLFDHYELDSAVIGQVTDTDRFVLTYEGEVFADIPVQPLSDEAPVYILEGRAAQFDAVNHDYSNIDAQDTLMKLLSHPTMASKNWAYSQYDQQVGANTIIKPGLSAGVTRVEGTKKAIAATLDGEARYVFNNPYEGGKMVVAEAYRNLISVGSLPLAMTDCLNYGNPEKPEIYQQLADSTRGMAEACGALNTPVVSGNVSLYNETKGDAIFPTPVVGMVGLIEDVDYLVDFKPSKGDTIYFVGEVKPDFGGSQLEKLLFNEVAHTDVAIDLEQEVARGEAIRQHIIDGKLGHVQAVGKGGVGVKLAQIAAYFNTGLEAQLDVSDAELFAETQGNYIVIAKQGKEIDIDGAEAIGTFGTESFKLSTNQGEVTLDVNRMTEAWKGAIHACMTSEV.

His-54 is an active-site residue. Positions 57 and 96 each coordinate ATP. Residue Glu-98 participates in Mg(2+) binding. Substrate is bound by residues 99–102 and Arg-121; that span reads SHNH. The active-site Proton acceptor is the His-100. Asp-122 is a Mg(2+) binding site. Gln-245 serves as a coordination point for substrate. Residue Asp-273 coordinates Mg(2+). 317 to 319 contacts substrate; that stretch reads ETQ. The ATP site is built by Asp-495 and Gly-532. Residue Asn-533 participates in Mg(2+) binding. Substrate is bound at residue Ser-535.

It belongs to the FGAMS family. Monomer. Part of the FGAM synthase complex composed of 1 PurL, 1 PurQ and 2 PurS subunits.

It localises to the cytoplasm. It carries out the reaction N(2)-formyl-N(1)-(5-phospho-beta-D-ribosyl)glycinamide + L-glutamine + ATP + H2O = 2-formamido-N(1)-(5-O-phospho-beta-D-ribosyl)acetamidine + L-glutamate + ADP + phosphate + H(+). Its pathway is purine metabolism; IMP biosynthesis via de novo pathway; 5-amino-1-(5-phospho-D-ribosyl)imidazole from N(2)-formyl-N(1)-(5-phospho-D-ribosyl)glycinamide: step 1/2. Its function is as follows. Part of the phosphoribosylformylglycinamidine synthase complex involved in the purines biosynthetic pathway. Catalyzes the ATP-dependent conversion of formylglycinamide ribonucleotide (FGAR) and glutamine to yield formylglycinamidine ribonucleotide (FGAM) and glutamate. The FGAM synthase complex is composed of three subunits. PurQ produces an ammonia molecule by converting glutamine to glutamate. PurL transfers the ammonia molecule to FGAR to form FGAM in an ATP-dependent manner. PurS interacts with PurQ and PurL and is thought to assist in the transfer of the ammonia molecule from PurQ to PurL. In Macrococcus caseolyticus (strain JCSC5402) (Macrococcoides caseolyticum), this protein is Phosphoribosylformylglycinamidine synthase subunit PurL.